A 544-amino-acid chain; its full sequence is MKNFILLVFLFLLVSNSLGKSNKKDDQSPEIVKINSNDHLPLYYEIIISGHFSIDKTGLTVTYLGDKIHDFEFIKGQVLNVTGEPQNNPIPTVSINPDQLNDDRFEVSDSSDFSKQTPTPTPTPTSKPTSTPTSTPSQTIPPTVSPTVPPQTTSPTSKPTSTPTPTSTPTPTSTPTPTSQTIPPPTTTPKPTKSSKPTKTPVPTPTPTRPSSSVSKGYDIIKFNITDIEDIEMGKITISYKNGQSSSKHFQPNSIIKSIERTNSVGGVVEFKGSFFYTDDYEPSIKIGNKICETLTSSQTSIRCYLTNGTGCGYTITIDNLLNPIDNNGNSNLTYCYANPIIDKVIGYKDKKLTLITIIGKNFLNNATVIIEKPNGNKRNCSNVLLSTDTLFICELSKSYHTLSSPKTTNTTMLSFINNSPNSTVSNEIIEMISGYFQIKISTKPSTTDDDNNKNNDDGDSEIDSVGKSAVDSSKSNNNSGGGGNKKLYLLIILPTVLFIIVAALVAIFIKTRVSQNSGSKVNKNNNKKDSINVPFQMLDEITT.

The signal sequence occupies residues 1 to 19 (MKNFILLVFLFLLVSNSLG). Residues 20 to 489 (KSNKKDDQSP…SGGGGNKKLY (470 aa)) lie on the Extracellular side of the membrane. N-linked (GlcNAc...) asparagine glycosylation occurs at asparagine 80. The span at 84-99 (EPQNNPIPTVSINPDQ) shows a compositional bias: polar residues. Positions 84–215 (EPQNNPIPTV…TPTRPSSSVS (132 aa)) are disordered. Low complexity-rich tracts occupy residues 126 to 142 (SKPTSTPTSTPSQTIPP), 150 to 165 (PQTTSPTSKPTSTPTP), and 189 to 199 (PKPTKSSKPTK). Residues asparagine 224, asparagine 308, asparagine 332, asparagine 366, asparagine 380, asparagine 410, asparagine 422, and asparagine 478 are each glycosylated (N-linked (GlcNAc...) asparagine). The interval 444 to 480 (KPSTTDDDNNKNNDDGDSEIDSVGKSAVDSSKSNNNS) is disordered. The chain crosses the membrane as a helical span at residues 490-510 (LLIILPTVLFIIVAALVAIFI). At 511-544 (KTRVSQNSGSKVNKNNNKKDSINVPFQMLDEITT) the chain is on the cytoplasmic side.

N- and O-glycosylated.

The protein resides in the membrane. The protein is Glycoprotein gp100 (gppA) of Dictyostelium discoideum (Social amoeba).